The primary structure comprises 449 residues: XK-related protein 2 (449 aa).

Helical transmembrane passes span 35–55 (FSIL…LYMV), 68–88 (TYTF…LIFV), 98–118 (LSLF…EAMI), 174–194 (IQAF…SLIS), 204–224 (LMAF…MLAI), 241–261 (LCIT…LVLF), 269–289 (AVPF…VKFW), 306–326 (VGTL…NFSC), 357–377 (LVEN…VLLN), and 382–402 (LIAV…LLFF).

It belongs to the XK family.

It is found in the membrane. The polypeptide is XK-related protein 2 (Xkrx) (Mus musculus (Mouse)).